Consider the following 200-residue polypeptide: TATA-box-binding protein 2 (200 aa).

2 tandem repeats follow at residues 25–101 and 115–192.

It belongs to the TBP family. In terms of assembly, belongs to the TFIID complex together with the TBP-associated factors (TAFs). Binds DNA as monomer.

The protein resides in the nucleus. General transcription factor that functions at the core of the DNA-binding multiprotein factor TFIID. Binding of TFIID to the TATA box is the initial transcriptional step of the pre-initiation complex (PIC), playing a role in the activation of eukaryotic genes transcribed by RNA polymerase II. This is TATA-box-binding protein 2 (TBP2) from Zea mays (Maize).